A 79-amino-acid chain; its full sequence is Small ribosomal subunit protein bS16 (79 aa).

This sequence belongs to the bacterial ribosomal protein bS16 family.

The protein is Small ribosomal subunit protein bS16 of Nitratidesulfovibrio vulgaris (strain DSM 19637 / Miyazaki F) (Desulfovibrio vulgaris).